We begin with the raw amino-acid sequence, 875 residues long: DNA gyrase subunit A (875 aa).

A Topo IIA-type catalytic domain is found at 34–533 (LPDVRDGLKP…NSADINLEDL (500 aa)). Tyr-122 functions as the O-(5'-phospho-DNA)-tyrosine intermediate in the catalytic mechanism. Positions 560–566 (QRRGGKG) match the GyrA-box motif. Residues 841-875 (EPVDEEDLDTIDGSAAEGDDEIAPEVDVDDEPEEE) are disordered. Residues 857–875 (EGDDEIAPEVDVDDEPEEE) show a composition bias toward acidic residues.

Belongs to the type II topoisomerase GyrA/ParC subunit family. In terms of assembly, heterotetramer, composed of two GyrA and two GyrB chains. In the heterotetramer, GyrA contains the active site tyrosine that forms a transient covalent intermediate with DNA, while GyrB binds cofactors and catalyzes ATP hydrolysis.

It is found in the cytoplasm. The enzyme catalyses ATP-dependent breakage, passage and rejoining of double-stranded DNA.. Its function is as follows. A type II topoisomerase that negatively supercoils closed circular double-stranded (ds) DNA in an ATP-dependent manner to modulate DNA topology and maintain chromosomes in an underwound state. Negative supercoiling favors strand separation, and DNA replication, transcription, recombination and repair, all of which involve strand separation. Also able to catalyze the interconversion of other topological isomers of dsDNA rings, including catenanes and knotted rings. Type II topoisomerases break and join 2 DNA strands simultaneously in an ATP-dependent manner. In Shigella flexneri, this protein is DNA gyrase subunit A.